The primary structure comprises 257 residues: Acetyl-coenzyme A carboxylase carboxyl transferase subunit beta 1 (257 aa).

The CoA carboxyltransferase N-terminal domain occupies 1-257 (MNINDIFLKR…KMHVNTGGEA (257 aa)).

This sequence belongs to the AccD/PCCB family. Acetyl-CoA carboxylase is a heterohexamer composed of biotin carboxyl carrier protein (AccB), biotin carboxylase (AccC) and two subunits each of ACCase subunit alpha (AccA) and ACCase subunit beta (AccD).

Its subcellular location is the cytoplasm. It catalyses the reaction N(6)-carboxybiotinyl-L-lysyl-[protein] + acetyl-CoA = N(6)-biotinyl-L-lysyl-[protein] + malonyl-CoA. It functions in the pathway lipid metabolism; malonyl-CoA biosynthesis; malonyl-CoA from acetyl-CoA: step 1/1. Component of the acetyl coenzyme A carboxylase (ACC) complex. Biotin carboxylase (BC) catalyzes the carboxylation of biotin on its carrier protein (BCCP) and then the CO(2) group is transferred by the transcarboxylase to acetyl-CoA to form malonyl-CoA. This chain is Acetyl-coenzyme A carboxylase carboxyl transferase subunit beta 1, found in Lachnospira eligens (strain ATCC 27750 / DSM 3376 / VPI C15-48 / C15-B4) (Eubacterium eligens).